The sequence spans 382 residues: MLVVRADYKKYPVPVLEKMRIDEDEFYNKYDACVVVQTCNRIEAYFDTEINSNVDGILKDFQGFDVLKGKNATFHFLKVSCGMDSMILGENQILGQIKTSFQKARELKKTSRYLDSLFLKAIHVGQRARTETKINEGGVSIGSAAVELAEKNFGLANRNVLLIGAGEMGTLVAKALIEKHIKAVIVANRTYERAETLAKELKGMAVHFDKLKEAINFSDVIICATSSPHHILEKKDLIDVGNKIIIDIANPRDVDDSVRELENIELYAIDDLRHISDKNLQSRIEEIPAVEKIIDEEYEVLMKQIEKINVEEVLKEFNNYIEEIRVKELEKAIKLSKTKNPEEIMENFSKAFAKRITHDFVSYSINTSKEDLMNSAWWKNGK.

Substrate-binding positions include T38–R41, S85, E90–Q92, and Q96. The active-site Nucleophile is C39. G164–G169 is a binding site for NADP(+).

Belongs to the glutamyl-tRNA reductase family. In terms of assembly, homodimer.

It carries out the reaction (S)-4-amino-5-oxopentanoate + tRNA(Glu) + NADP(+) = L-glutamyl-tRNA(Glu) + NADPH + H(+). It functions in the pathway porphyrin-containing compound metabolism; protoporphyrin-IX biosynthesis; 5-aminolevulinate from L-glutamyl-tRNA(Glu): step 1/2. Functionally, catalyzes the NADPH-dependent reduction of glutamyl-tRNA(Glu) to glutamate 1-semialdehyde (GSA). This Methanococcus maripaludis (strain C5 / ATCC BAA-1333) protein is Glutamyl-tRNA reductase.